A 306-amino-acid chain; its full sequence is Palmitoyl-protein thioesterase ABHD10, mitochondrial (306 aa).

The N-terminal 52 residues, 1–52 (MAVARLAAVAAWVPCRSWGWAAVPFGPHRGLSVLLARIPQRAPRWLPACRQK), are a transit peptide targeting the mitochondrion. An AB hydrolase-1 domain is found at 78-178 (IIFIPGYLSY…VVALIGVATA (101 aa)). Catalysis depends on charge relay system residues serine 152, aspartate 249, and histidine 279.

It belongs to the AB hydrolase superfamily.

Its subcellular location is the mitochondrion. The enzyme catalyses S-hexadecanoyl-L-cysteinyl-[protein] + H2O = L-cysteinyl-[protein] + hexadecanoate + H(+). The catalysed reaction is mycophenolic acid O-acyl-beta-D-glucuronide + H2O = mycophenolate + D-glucuronate + H(+). Its activity is regulated as follows. Inhibited by palmostatin-B. Its function is as follows. Acts as an acyl-protein thioesterase that hydrolyzes fatty acids from acylated residues in proteins. Regulates the mitochondrial S-depalmitoylation of the nucleophilic active site residue of peroxiredoxin-5/PRDX5, a key antioxidant protein, therefore modulating mitochondrial antioxidant ability. Also catalyzes the deglucuronidation of mycophenolic acid acyl-glucuronide, an active metabolite of the immunosuppressant drug mycophenolate. The chain is Palmitoyl-protein thioesterase ABHD10, mitochondrial from Homo sapiens (Human).